Reading from the N-terminus, the 182-residue chain is Unknown protein 1 (182 aa).

The protein is Unknown protein 1 of Helianthus annuus (Common sunflower).